Reading from the N-terminus, the 255-residue chain is Probable esterase ATEG_07663 (255 aa).

Catalysis depends on charge relay system residues Ser-122, Asp-200, and His-227.

This sequence belongs to the LovG family.

Functionally, probable esterase; part of the cluster B that mediates the biosynthesis of azasperpyranones, members of the azaphilone family that exhibit anti-cancer activities. Azasperpyranones are synthesized by 2 clusters, A and B. Cluster A is responsible for the production of the polyhydric phenol moiety while the azaphilonoid scaffold is produced by the cluster B. The non-reducing polyketide synthase ATEG_03629 produces 5-methyl orsellinic acid, which is then reduced to 5-methyl orsellinic aldehyde by the NRPS-like protein ATEG_03630. 5-methyl orsellinic aldehyde is then first hydroxylated by the FAD-dependent monooxygenase ATEG_03635 and subsequently hydroxylated by the cytochrome P450 monooxygenase ATEG_03631 to produce the unstable polyhydric phenol precursor of azasperpyranones. On the other hand, the polyketide synthase ATEG_07659 is responsible for producing the 3,5-dimethyloctadienone moiety from acetyl-CoA, three malonyl-CoA, and two S-adenosyl methionines (SAM). The 3,5-dimethyloctadienone moiety is then loaded onto the SAT domain of ATEG_07661 and extended with four malonyl-CoA and one SAM, which leads to the formation of 2,4-dihydroxy-6-(5,7-dimethyl-2-oxo-trans-3-trans-5-nonadienyl)-3-methylbenzaldehyde (compound 8) after reductive release and aldol condensation. The FAD-dependent monooxygenase ATEG_07662 is the next enzyme in the biosynthesis sequence and hydroxylates the side chain at the benzylic position of compound 8. In Aspergillus nidulans, afoF, the ortholog of the FAD-dependent oxygenase ATEG_07660, is the key enzyme for the biosynthesis of asperfuranone by catalyzing the hydroxylation at C-8 of to prevent the formation of a six-membered ring hemiacetal intermediate and thus facilitating the formation of a five-membered ring to produce asperfuranone. In Aspergillus terreus, ATEG_07660 is probably not functional, which leads to the formation of the six-membered ring hemiacetal intermediate presperpyranone instead of asperfuranone. Finally, ATEG_03636 is involved in the condensation of the polyhydric phenol moiety produced by cluster A and the perasperpyranone precursor produced by cluster B, to yield azasperpyranone A. Further modifications of azasperpyranone A result in the production of derivatives, including azasperpyranone B to F. This Aspergillus terreus (strain NIH 2624 / FGSC A1156) protein is Probable esterase ATEG_07663.